The chain runs to 339 residues: Ferrochelatase (339 aa).

Residues histidine 209 and glutamate 290 each coordinate Fe cation.

The protein belongs to the ferrochelatase family.

The protein resides in the cytoplasm. It catalyses the reaction heme b + 2 H(+) = protoporphyrin IX + Fe(2+). The protein operates within porphyrin-containing compound metabolism; protoheme biosynthesis; protoheme from protoporphyrin-IX: step 1/1. In terms of biological role, catalyzes the ferrous insertion into protoporphyrin IX. This chain is Ferrochelatase, found in Rhizobium meliloti (strain 1021) (Ensifer meliloti).